The following is a 225-amino-acid chain: Enolase-phosphatase E1 (225 aa).

This sequence belongs to the HAD-like hydrolase superfamily. MasA/MtnC family. In terms of assembly, monomer. Mg(2+) serves as cofactor.

The catalysed reaction is 5-methylsulfanyl-2,3-dioxopentyl phosphate + H2O = 1,2-dihydroxy-5-(methylsulfanyl)pent-1-en-3-one + phosphate. Its pathway is amino-acid biosynthesis; L-methionine biosynthesis via salvage pathway; L-methionine from S-methyl-5-thio-alpha-D-ribose 1-phosphate: step 3/6. The protein operates within amino-acid biosynthesis; L-methionine biosynthesis via salvage pathway; L-methionine from S-methyl-5-thio-alpha-D-ribose 1-phosphate: step 4/6. In terms of biological role, bifunctional enzyme that catalyzes the enolization of 2,3-diketo-5-methylthiopentyl-1-phosphate (DK-MTP-1-P) into the intermediate 2-hydroxy-3-keto-5-methylthiopentenyl-1-phosphate (HK-MTPenyl-1-P), which is then dephosphorylated to form the acireductone 1,2-dihydroxy-3-keto-5-methylthiopentene (DHK-MTPene). This chain is Enolase-phosphatase E1, found in Shewanella piezotolerans (strain WP3 / JCM 13877).